Here is a 436-residue protein sequence, read N- to C-terminus: Acetyl-CoA decarbonylase/synthase complex subunit delta 2 (436 aa).

Belongs to the CdhD family. Heterodimer of delta and gamma chains. The ACDS complex is made up of alpha, epsilon, beta, gamma and delta chains with a probable stoichiometry of (alpha(2)epsilon(2))(4)-beta(8)-(gamma(1)delta(1))(8) (Potential).

Its pathway is one-carbon metabolism; methanogenesis from acetate. Functionally, part of a complex that catalyzes the reversible cleavage of acetyl-CoA, allowing growth on acetate as sole source of carbon and energy. Probably maintains the overall quaternary structure of the ACDS complex. The chain is Acetyl-CoA decarbonylase/synthase complex subunit delta 2 (cdhD2) from Methanosarcina acetivorans (strain ATCC 35395 / DSM 2834 / JCM 12185 / C2A).